Consider the following 144-residue polypeptide: Ribonuclease H (144 aa).

In terms of domain architecture, RNase H type-1 spans Met1 to Asp141. The Mg(2+) site is built by Asp9, Glu47, Asp69, and Asp133.

It belongs to the RNase H family. As to quaternary structure, monomer. Requires Mg(2+) as cofactor.

Its subcellular location is the cytoplasm. The enzyme catalyses Endonucleolytic cleavage to 5'-phosphomonoester.. In terms of biological role, endonuclease that specifically degrades the RNA of RNA-DNA hybrids. The chain is Ribonuclease H from Erythrobacter litoralis (strain HTCC2594).